A 252-amino-acid chain; its full sequence is Trans-aconitate 2-methyltransferase (252 aa).

This sequence belongs to the methyltransferase superfamily. Tam family.

It is found in the cytoplasm. It carries out the reaction trans-aconitate + S-adenosyl-L-methionine = (E)-3-(methoxycarbonyl)pent-2-enedioate + S-adenosyl-L-homocysteine. Functionally, catalyzes the S-adenosylmethionine monomethyl esterification of trans-aconitate. The sequence is that of Trans-aconitate 2-methyltransferase from Escherichia coli O139:H28 (strain E24377A / ETEC).